Here is an 851-residue protein sequence, read N- to C-terminus: Pre-mRNA-splicing factor syf1 (851 aa).

HAT repeat units lie at residues 12–44 (YLIADNDSVYEQDLLRNPGTIKPWLAYIEYKQQ), 63–95 (ISILNDFQVMERACKQLPRSYKLWKMYLEFRTK), 107–139 (AEFQKVNTLFERALILLNKMPRIWEMYLTFMLQ), 141–175 (PLVTQTRRTFDRALRALPVTQHNRIWKLYKTFARS), 291–326 (GNFEKARDVFEEGITTVMTVRDFTLIFDSYVEFEES), 398–432 (EIVNTYTAAIAAINPKKAVGKFSELWVNYAKFYER), 434–470 (GDLDTARIIFEKAVKVPFKSVNELAETWCEWAEMELR), 487–519 (APKKSTVDYFDETLSPQQRIHKSWKLWSFYVDL), 558–592 (KYFEESFKVYERGLDLFTYPVAFELWNLYLTKAVD), 595–629 (IGIERLRDLFEQALDGCPPKFARPLYLMYGNLEEE), 667–701 (FGLPSTRPIYERAIAALPDHEAKEMCLKFAEMERR), and 703–737 (GEIDRARAIYGHASQFCDPRTNAPFWQKWEAFEVQ). Disordered regions lie at residues 771-793 (ARSQQRAPEGEEATAAAEREMDT) and 810-851 (IGFV…MEAD). Low complexity predominate over residues 825-841 (APPAGQGPVAAPANPDA). Acidic residues predominate over residues 842–851 (IDLDDDMEAD).

This sequence belongs to the crooked-neck family. In terms of assembly, associated with the spliceosome.

It is found in the nucleus. Involved in pre-mRNA splicing and cell cycle progression. The polypeptide is Pre-mRNA-splicing factor syf1 (syf1) (Emericella nidulans (strain FGSC A4 / ATCC 38163 / CBS 112.46 / NRRL 194 / M139) (Aspergillus nidulans)).